Consider the following 324-residue polypeptide: Antihemorrhagic factor jMSF (324 aa).

Residues 1–19 (MHFLVALVLLGQIIGSTLS) form the signal peptide. Cystatin fetuin-A-type domains lie at 22-130 (VRGD…VKCH) and 141-254 (RNCP…SDCV). The Cell attachment site motif lies at 23–25 (RGD). 7 cysteine pairs are disulfide-bonded: Cys28–Cys315, Cys85–Cys96, Cys110–Cys129, Cys143–Cys146, Cys205–Cys217, Cys230–Cys253, and Cys287–Cys291. Asn204 carries N-linked (GlcNAc...) asparagine glycosylation. Asn282 carries N-linked (GlcNAc...) asparagine glycosylation.

Homodimer. As to expression, expressed by the liver.

The protein resides in the secreted. In terms of biological role, suppress hemorrhage induced by metalloproteinases from the same venom (brevilysin-H3, -H4, -H6) and from habu venom (weak inhibition of the metalloproteinases HR2A). The non-hemorrhagic brevilysin-H2 is strongly inhibited by jMSF, whereas the brevilysin-L6 is not inhibited. Does not inhibit serine and cysteine proteases such as trypsin, chymotrypsin, thermolysin, and papain. The inhibition may occur by formation of a non-covalent complex between this protein and the proteinases at their metalloproteinase domains. In Gloydius blomhoffii (Mamushi), this protein is Antihemorrhagic factor jMSF.